Consider the following 250-residue polypeptide: Ribosomal RNA small subunit methyltransferase J (250 aa).

S-adenosyl-L-methionine-binding positions include R101–D102, E117–R118, S153–S154, and D171.

Belongs to the methyltransferase superfamily. RsmJ family.

Its subcellular location is the cytoplasm. It carries out the reaction guanosine(1516) in 16S rRNA + S-adenosyl-L-methionine = N(2)-methylguanosine(1516) in 16S rRNA + S-adenosyl-L-homocysteine + H(+). Functionally, specifically methylates the guanosine in position 1516 of 16S rRNA. This Erwinia tasmaniensis (strain DSM 17950 / CFBP 7177 / CIP 109463 / NCPPB 4357 / Et1/99) protein is Ribosomal RNA small subunit methyltransferase J.